The sequence spans 349 residues: Ureidoglycolate dehydrogenase (NAD(+)) (349 aa).

His116 (proton acceptor) is an active-site residue. NAD(+) is bound by residues Ser140, 174 to 176, Lys224, and 306 to 308; these read DMA and GQD.

Belongs to the LDH2/MDH2 oxidoreductase family. Homodimer.

It is found in the cytoplasm. It catalyses the reaction (S)-ureidoglycolate + NAD(+) = N-carbamoyl-2-oxoglycine + NADH + H(+). It functions in the pathway nitrogen metabolism; (S)-allantoin degradation; oxalurate from (S)-ureidoglycolate: step 1/1. Its function is as follows. AllD plays a pivotal role as a metabolic branch-point enzyme in nitrogen utilization via the assimilation of allantoin. It is able to utilize allantoin as a sole source of nitrogen under anaerobic conditions. Catalyzes the oxidation of ureidoglycolate to oxalurate. In Escherichia coli O157:H7, this protein is Ureidoglycolate dehydrogenase (NAD(+)).